The primary structure comprises 64 residues: Transcription factor P13 (64 aa).

Functionally, transcription factor that regulates expression of phage structural components with protein P14. The protein is Transcription factor P13 of Pseudoalteromonas phage PM2 (Bacteriophage PM2).